Reading from the N-terminus, the 325-residue chain is Retinal homeobox protein Rx-B (325 aa).

The Octapeptide motif motif lies at 32-39 (HSIEAILG). Residues 75 to 87 (TEEIHPQQEHLED) show a composition bias toward basic and acidic residues. The disordered stretch occupies residues 75–136 (TEEIHPQQEH…KKKHRRNRTT (62 aa)). Positions 99–117 (AKTSSECLSPGLSTSNSDN) are enriched in polar residues. The segment at residues 130 to 189 (HRRNRTTFTTYQLHELERAFEKSHYPDVYSREELAMKVNLPEVRVQVWFQNRRAKWRRQE) is a DNA-binding region (homeobox). Positions 302–315 (NSIASLRMKAKEHI) match the OAR motif. A Nuclear localization signal motif is present at residues 308–312 (RMKAK).

It belongs to the paired homeobox family. Bicoid subfamily. In terms of tissue distribution, highly expressed in anterior neural plate followed by neural retina, pigmented epithelium, in pineal gland, diencephalon floor and epiphysis. At later stages, the neuroretina remains the primary site of expression. No expression in the developing lens and cornea.

It localises to the nucleus. Functionally, plays a critical role in eye formation by regulating the initial specification of retinal cells and/or their subsequent proliferation. This is Retinal homeobox protein Rx-B (rax-b) from Xenopus laevis (African clawed frog).